A 314-amino-acid chain; its full sequence is Protein phosphatase PTC7 homolog fig (314 aa).

The PPM-type phosphatase domain maps to 43-309 (PYLVTVVQGR…DDITLILSSV (267 aa)). Asp-87, Gly-88, and Asp-232 together coordinate Mn(2+).

Belongs to the PP2C family. The cofactor is Mg(2+). It depends on Mn(2+) as a cofactor.

It catalyses the reaction O-phospho-L-seryl-[protein] + H2O = L-seryl-[protein] + phosphate. The catalysed reaction is O-phospho-L-threonyl-[protein] + H2O = L-threonyl-[protein] + phosphate. The protein is Protein phosphatase PTC7 homolog fig of Drosophila simulans (Fruit fly).